We begin with the raw amino-acid sequence, 400 residues long: Nicotinate phosphoribosyltransferase (400 aa).

His220 bears the Phosphohistidine; by autocatalysis mark.

This sequence belongs to the NAPRTase family. Post-translationally, transiently phosphorylated on a His residue during the reaction cycle. Phosphorylation strongly increases the affinity for substrates and increases the rate of nicotinate D-ribonucleotide production. Dephosphorylation regenerates the low-affinity form of the enzyme, leading to product release.

It carries out the reaction nicotinate + 5-phospho-alpha-D-ribose 1-diphosphate + ATP + H2O = nicotinate beta-D-ribonucleotide + ADP + phosphate + diphosphate. It functions in the pathway cofactor biosynthesis; NAD(+) biosynthesis; nicotinate D-ribonucleotide from nicotinate: step 1/1. In terms of biological role, catalyzes the synthesis of beta-nicotinate D-ribonucleotide from nicotinate and 5-phospho-D-ribose 1-phosphate at the expense of ATP. This Salmonella choleraesuis (strain SC-B67) protein is Nicotinate phosphoribosyltransferase.